A 206-amino-acid polypeptide reads, in one-letter code: MEEYEKFRALASKEAEKRGYLFQEAQHAYSAGNKAKAHELSQEGKLCGERMENYNRQAASAIYLYKNSQCNPDEIDLHGLYIDEAVQAVQQRIENCIRRGDNHLHIIVGRGNHSANHVEKLRPAIVRMLEQQSIKYNSEVNEGRIYVYLPSATSPIQPNFNCIQEPQEAYSRPQHSTLTDQVEPEKIVEEIATNCFPRLKTCCAIM.

The 76-residue stretch at 75-150 folds into the Smr domain; it reads IDLHGLYIDE…NEGRIYVYLP (76 aa).

Its subcellular location is the cytoplasm. It localises to the nucleus. The sequence is that of Smr domain-containing protein C11H11.03c from Schizosaccharomyces pombe (strain 972 / ATCC 24843) (Fission yeast).